Here is a 318-residue protein sequence, read N- to C-terminus: Olfactory receptor 5G25 (318 aa).

Residues 1-25 (MMHRNQTVVTEFFFTGLTSSFHLQI) are Extracellular-facing. A glycan (N-linked (GlcNAc...) asparagine) is linked at Asn-5. A helical membrane pass occupies residues 26–46 (VLFLTFLCVYLATLLGNLGMI). The Cytoplasmic segment spans residues 47-54 (ILIHQDTR). A helical transmembrane segment spans residues 55–75 (LHIPMYFFLSHLSFVDACSSS). The Extracellular portion of the chain corresponds to 76–99 (VISPKMLSDIFVDKKVISFLGCAI). Cys-97 and Cys-189 are joined by a disulfide. The chain crosses the membrane as a helical span at residues 100 to 120 (QFCLFSQFVVTECFLLASMAY). Over 121-133 (DRYVAICKPLLYT) the chain is Cytoplasmic. A helical membrane pass occupies residues 134 to 154 (LIMSQRVCVQLVIGPYSIGLI). Residues 155–196 (STVVHTTSAFILPYCGPNLINHFFCDLLPVLSLACADTQMNK) are Extracellular-facing. The helical transmembrane segment at 197 to 217 (HLLFIMAGILGVFSGIIILVS) threads the bilayer. Topologically, residues 218–237 (YVYIAITILKINSADGRRKA) are cytoplasmic. Residues 238 to 258 (FSTCSSHLTAVSILYGTLFFI) traverse the membrane as a helical segment. The Extracellular portion of the chain corresponds to 259-271 (YVRPSSSFSLDIN). A helical membrane pass occupies residues 272-292 (KVVSLFYTAVIPMLNPFIYSL). Residues 293-318 (RNKEVKDALIRTFEKKFCYSLQDKIL) are Cytoplasmic-facing.

Belongs to the G-protein coupled receptor 1 family.

It is found in the cell membrane. Potential odorant receptor. This is Olfactory receptor 5G25 from Mus musculus (Mouse).